The following is an 84-amino-acid chain: Acyl carrier protein MbtL (84 aa).

Residues S6 to Y81 enclose the Carrier domain. S41 is subject to O-(pantetheine 4'-phosphoryl)serine.

Post-translationally, 4'-phosphopantetheine is transferred from CoA to a specific serine of apo-ACP, leading to the activated holo-ACP form.

It is found in the cytoplasm. Its pathway is siderophore biosynthesis; mycobactin biosynthesis. Functionally, acyl carrier protein involved in the formation of acyl-S-ACP intermediates within the mycobactin biosynthesis process. The aliphatic chains carried by ACP are subsequently transferred on to the mycobactin core by MbtK. In Mycobacterium bovis (strain ATCC BAA-935 / AF2122/97), this protein is Acyl carrier protein MbtL (mbtL).